The primary structure comprises 316 residues: Olfactory receptor 2K2 (316 aa).

Residues 1–20 (MQGENFTIWSIFFLEGFSQY) lie on the Extracellular side of the membrane. A glycan (N-linked (GlcNAc...) asparagine) is linked at Asn-5. A helical transmembrane segment spans residues 21 to 41 (PGLEVVLFVFSLVMYLTTLLG). The Cytoplasmic segment spans residues 42 to 65 (NSTLILITILDSRLKTPMYLFLGN). Residues 66-86 (LSFMDICYTSASVPTLLVNLL) traverse the membrane as a helical segment. At 87–97 (SSQKTIIFSGC) the chain is on the extracellular side. A disulfide bridge connects residues Cys-97 and Cys-188. A helical membrane pass occupies residues 98 to 118 (AVQMYLSLAMGSTECVLLAVM). Residues 119 to 143 (AYDRYVAICNPLRYSIIMNRCVCAR) lie on the Cytoplasmic side of the membrane. A helical membrane pass occupies residues 144-164 (MATVSWVTGCLTALLETSFAL). Over 165–199 (QIPLCGNLIDHFTCEILAVLKLACTSSLLMNTIML) the chain is Extracellular. Residues 200–220 (VVSILLLPIPMLLVCISYIFI) traverse the membrane as a helical segment. At 221–238 (LSTILRITSAEGRNKAFS) the chain is on the cytoplasmic side. Residues 239-259 (TCGAHLTVVILYYGAALSMYL) traverse the membrane as a helical segment. The Extracellular portion of the chain corresponds to 260 to 270 (KPSSSNAQKID). A helical membrane pass occupies residues 271–291 (KIISLLYGVLTPMLNPIIYSL). At 292–316 (RNKEVKDAMKKLLGKITLHQTHEHL) the chain is on the cytoplasmic side.

This sequence belongs to the G-protein coupled receptor 1 family.

It localises to the cell membrane. Functionally, odorant receptor. This is Olfactory receptor 2K2 (OR2K2) from Homo sapiens (Human).